A 1025-amino-acid polypeptide reads, in one-letter code: Transcription factor tau 131 kDa subunit (1025 aa).

A compositionally biased stretch (basic and acidic residues) spans 1–26 (MAAGKLKKEQQNQSAERESADTGKVN). Residues 1–71 (MAAGKLKKEQ…EDEYNSERDS (71 aa)) are disordered. Residues 46-65 (DEEYDDEDVPHDLQLSEDEY) show a composition bias toward acidic residues. 5 TPR repeats span residues 128 to 161 (VAQL…DARN), 162 to 195 (FAAY…NASD), 196 to 229 (WEFW…NPME), 230 to 263 (WESI…NPYD), and 264 to 297 (ANIL…NVER). Positions 128-569 (VAQLLSQANE…VDVVEMRKHQ (442 aa)) are sufficient to bind BDP1. The interval 309 to 334 (LDSSDEESAAEGEDADEKEPLEQDED) is disordered. The residue at position 311 (Ser-311) is a Phosphoserine. Positions 311–325 (SSDEESAAEGEDADE) are enriched in acidic residues. TPR repeat units follow at residues 432–465 (IDIR…TFSD), 467–501 (ADLY…EWRT), 502–535 (TDVF…EPDD), 536–569 (LDIR…RKHQ), 875–908 (PYLY…IPDD), and 959–992 (QEAD…YDDG).

As to quaternary structure, component of the TFIIIC complex composed of TFC1, TFC3, TFC4, TFC6, TFC7 and TFC8. The subunits are organized in two globular domains, tauA and tauB, connected by a proteolysis-sensitive and flexible linker. Interacts with TFC1, TFC3, TFC6, TFIIIB subunits BRF1 and BDP1, and with RNA polymerase III subunit RPC10. In terms of processing, phosphorylated.

The protein resides in the nucleus. TFIIIC mediates tRNA and 5S RNA gene activation by binding to intragenic promoter elements. Upstream of the transcription start site, TFIIIC assembles the initiation complex TFIIIB-TFIIIC-tDNA, which is sufficient for RNA polymerase III recruitment and function. Part of the tauA domain of TFIIIC that binds boxA DNA promoter sites of tRNA and similar genes. TFC4 is the TFIIIB-assembling subunit of TFIIIC and essential for viability. In Saccharomyces cerevisiae (strain ATCC 204508 / S288c) (Baker's yeast), this protein is Transcription factor tau 131 kDa subunit (TFC4).